Reading from the N-terminus, the 432-residue chain is Asparagine--tRNA ligase (432 aa).

The protein belongs to the class-II aminoacyl-tRNA synthetase family. In terms of assembly, homodimer.

The protein localises to the cytoplasm. The enzyme catalyses tRNA(Asn) + L-asparagine + ATP = L-asparaginyl-tRNA(Asn) + AMP + diphosphate + H(+). The sequence is that of Asparagine--tRNA ligase from Lactobacillus gasseri (strain ATCC 33323 / DSM 20243 / BCRC 14619 / CIP 102991 / JCM 1131 / KCTC 3163 / NCIMB 11718 / NCTC 13722 / AM63).